We begin with the raw amino-acid sequence, 376 residues long: Na(+)/H(+) antiporter NhaA (376 aa).

Transmembrane regions (helical) follow at residues 8-28, 49-69, 87-107, 117-137, 140-160, 162-182, 209-229, 248-268, 270-290, 321-341, and 349-369; these read FLAT…AAML, LSLL…LVGL, ILPC…YLAF, GWAI…ALLG, APAS…MGAV, IIAL…AIVI, LAVL…ALAI, PWVA…VSFA, IGAE…LFLG, GVAL…GLAF, and EVKI…YALL.

The protein belongs to the NhaA Na(+)/H(+) (TC 2.A.33) antiporter family.

It localises to the cell inner membrane. The catalysed reaction is Na(+)(in) + 2 H(+)(out) = Na(+)(out) + 2 H(+)(in). Functionally, na(+)/H(+) antiporter that extrudes sodium in exchange for external protons. The sequence is that of Na(+)/H(+) antiporter NhaA from Rhizorhabdus wittichii (strain DSM 6014 / CCUG 31198 / JCM 15750 / NBRC 105917 / EY 4224 / RW1) (Sphingomonas wittichii).